The following is a 123-amino-acid chain: Defensin beta 118 (123 aa).

The N-terminal stretch at 1–19 (MKLLLLALPMLVLLPQVIP) is a signal peptide. Disulfide bonds link Cys27-Cys54, Cys34-Cys48, and Cys38-Cys55. Positions 65-123 (VPATSPTPLSDSTPGIIDDILTVRFTTDYFEVSSKKDMVEESEAGRGTETSLPNVHHSS) are excised as a propeptide. Over residues 100-110 (KDMVEESEAGR) the composition is skewed to basic and acidic residues. The interval 100–123 (KDMVEESEAGRGTETSLPNVHHSS) is disordered. Residues 112–123 (TETSLPNVHHSS) are compositionally biased toward polar residues.

Belongs to the beta-defensin family. Post-translationally, the three-dimensional structure formed by the three intramolecular disulfide bridges is indispensable for antimicrobial activity. High-level and epididymis-specific expression. Most abundant in the epithelium of the caput and present in the epididymis lumen and bound to sperm. Also expressed in pancreas.

It is found in the secreted. Functionally, host defense peptide that exhibits antimicrobial activity against both Gram-negative bacteria, such as E.coli and S.typhimurium, and Gram-positive bacteria, such as S.aureus and B.subtilis. Inhibits cell adhesion of E.coli on intestinal epithelial enterocytes. Causes rapid permeabilization of both the outer and inner membrane of E.coli, leading to morphological alterations on the bacterial surface. Binds to bacterial lipopolysaccharides (LPS) with high affinity, and may thereby be involved in immunoregulation through LPS neutralization. May contribute to epididymal innate immunity and protect the sperm against attack by microorganisms. This Homo sapiens (Human) protein is Defensin beta 118 (DEFB118).